The following is a 157-amino-acid chain: Arginine repressor (157 aa).

Belongs to the ArgR family.

It is found in the cytoplasm. It participates in amino-acid biosynthesis; L-arginine biosynthesis [regulation]. Its function is as follows. Regulates arginine biosynthesis genes. This Deinococcus radiodurans (strain ATCC 13939 / DSM 20539 / JCM 16871 / CCUG 27074 / LMG 4051 / NBRC 15346 / NCIMB 9279 / VKM B-1422 / R1) protein is Arginine repressor.